The chain runs to 138 residues: uncharacterized protein (138 aa).

Residues 1–35 form the signal peptide; it reads MVAPAARVFLRAVRAALTSTVPDLLCLLARGSPRG.

As to expression, isoform 1 is highly expressed in small intestine, testis and kidney, medium expressed in brain and heart and low expressed in colon; it could not be detected in liver, adrenal gland and pancreas.

Its subcellular location is the secreted. This is an uncharacterized protein from Homo sapiens (Human).